A 122-amino-acid chain; its full sequence is Large ribosomal subunit protein uL14 (122 aa).

Belongs to the universal ribosomal protein uL14 family. As to quaternary structure, part of the 50S ribosomal subunit. Forms a cluster with proteins L3 and L19. In the 70S ribosome, L14 and L19 interact and together make contacts with the 16S rRNA in bridges B5 and B8.

Its function is as follows. Binds to 23S rRNA. Forms part of two intersubunit bridges in the 70S ribosome. The chain is Large ribosomal subunit protein uL14 from Idiomarina loihiensis (strain ATCC BAA-735 / DSM 15497 / L2-TR).